The chain runs to 343 residues: Mitochondrial amidoxime-reducing component 1 (343 aa).

Over 1–25 (MSNTVFSGAVGPLRAAALSISRHRL) the chain is Mitochondrial matrix. Residues 26-44 (PLLCAAGLGLTAVASWMWW) traverse the membrane as a helical; Signal-anchor for type II membrane protein segment. Topologically, residues 45 to 343 (RKRQGEAEDL…DPVYRVTRKG (299 aa)) are cytoplasmic. Positions 69, 70, and 94 each coordinate Mo-molybdopterin. The MOSC N-terminal region stretch occupies residues 95-186 (HWLVVTEEGN…SSQPYRLVHF (92 aa)). Residues 181 to 339 (YRLVHFEADV…IRVGDPVYRV (159 aa)) enclose the MOSC domain. Positions 215, 242, 276, 277, and 321 each coordinate Mo-molybdopterin.

The cofactor is Mo-molybdopterin.

The protein resides in the mitochondrion outer membrane. It is found in the membrane. It catalyses the reaction N(omega)-hydroxy-L-arginine + 2 Fe(II)-[cytochrome b5] + 2 H(+) = L-arginine + 2 Fe(III)-[cytochrome b5] + H2O. Its function is as follows. Catalyzes the reduction of N-oxygenated molecules, acting as a counterpart of cytochrome P450 and flavin-containing monooxygenases in metabolic cycles. As a component of prodrug-converting system, reduces a multitude of N-hydroxylated prodrugs particularly amidoximes, leading to increased drug bioavailability. May be involved in mitochondrial N(omega)-hydroxy-L-arginine (NOHA) reduction, regulating endogenous nitric oxide levels and biosynthesis. Postulated to cleave the N-OH bond of N-hydroxylated substrates in concert with electron transfer from NADH to cytochrome b5 reductase then to cytochrome b5, the ultimate electron donor that primes the active site for substrate reduction. The protein is Mitochondrial amidoxime-reducing component 1 (mtarc1) of Xenopus laevis (African clawed frog).